A 362-amino-acid chain; its full sequence is Putative F-box protein At3g25750 (362 aa).

In terms of domain architecture, F-box spans 4–52 (TEWSDLPEELLDLIANRYSSNIDVLRIRSTCKSWRSAVAMSKERLQFRF).

The chain is Putative F-box protein At3g25750 from Arabidopsis thaliana (Mouse-ear cress).